The chain runs to 123 residues: Alpha-lactalbumin B/C (123 aa).

A C-type lysozyme domain is found at Lys-1–Leu-123. Cystine bridges form between Cys-6/Cys-120, Cys-28/Cys-111, Cys-61/Cys-77, and Cys-73/Cys-91. Residues Lys-79, Asp-82, Asp-84, Asp-87, and Asp-88 each contribute to the Ca(2+) site.

It belongs to the glycosyl hydrolase 22 family. Lactose synthase (LS) is a heterodimer of a catalytic component, beta1,4-galactosyltransferase (beta4Gal-T1) and a regulatory component, alpha-lactalbumin (LA). Mammary gland specific. Secreted in milk.

Its subcellular location is the secreted. In terms of biological role, regulatory subunit of lactose synthase, changes the substrate specificity of galactosyltransferase in the mammary gland making glucose a good acceptor substrate for this enzyme. This enables LS to synthesize lactose, the major carbohydrate component of milk. In other tissues, galactosyltransferase transfers galactose onto the N-acetylglucosamine of the oligosaccharide chains in glycoproteins. The polypeptide is Alpha-lactalbumin B/C (Equus caballus (Horse)).